The primary structure comprises 957 residues: Histone-lysine N-methyltransferase, H3 lysine-9 specific SUVH3 (957 aa).

The 171-residue stretch at 73–243 (GHPPGVALGD…PQVCKFLMHG (171 aa)) folds into the YDG domain. A disordered region spans residues 182 to 209 (EAGGGEGGGGGEGGGGAKKGKGGKGGGK). Positions 183-198 (AGGGEGGGGGEGGGGA) are enriched in gly residues. Residues 319–441 (DVSGGQEAVP…HECGDGCSAK (123 aa)) enclose the Pre-SET domain. The region spanning 455–920 (LPLEVFMTES…QLEELSYNYG (466 aa)) is the SET domain. Disordered regions lie at residues 552-595 (DAAR…GGAE), 611-647 (AAGTAPGAGDNMDGVEGPAAQRSGGEEAAAGPGSSGA), and 783-805 (PPALPSTSDVGNGGTTGSGGGGG). Residues 560–578 (QQPQQQQPQQQQQQPAAGG) are compositionally biased toward low complexity. The segment covering 793–805 (GNGGTTGSGGGGG) has biased composition (gly residues). The region spanning 941 to 957 (FVMQCNCGAVGCIGNLM) is the Post-SET domain.

Belongs to the class V-like SAM-binding methyltransferase superfamily. Histone-lysine methyltransferase family. Suvar3-9 subfamily.

The protein localises to the nucleus. Its subcellular location is the chromosome. It carries out the reaction L-lysyl(9)-[histone H3] + S-adenosyl-L-methionine = N(6)-methyl-L-lysyl(9)-[histone H3] + S-adenosyl-L-homocysteine + H(+). Its function is as follows. Histone methyltransferase. Monomethylates specifically 'Lys-9' of histone H3. H3 'Lys-9Me1' (H3K9me1) functions as an epigenetic mark of repressed chromatin. In Chlamydomonas reinhardtii (Chlamydomonas smithii), this protein is Histone-lysine N-methyltransferase, H3 lysine-9 specific SUVH3 (SUVH3).